Reading from the N-terminus, the 493-residue chain is NADH-quinone oxidoreductase subunit N (493 aa).

A run of 14 helical transmembrane segments spans residues 8-28 (ALLPFIVLSAAAVAVMLAIAI), 34-54 (LVFWLTVGGLLAGLSTLPHAS), 71-91 (GLFFHALFLLAALVVALLCLA), 102-122 (EIFVLLLTSTLGALLLVSSAH), 123-143 (LAMFFLGLEVLTISLFPMIAY), 157-177 (YLMLSGLASSFLMFGMAMVYG), 200-220 (ALAGLFLILAAIGFKLSLVPF), 232-252 (PTPVTAFLATVSKASVFALLL), 266-286 (FLCVLGLLAVVSILAGNLLAL), 294-314 (LLAYSSIAHMGYLLTGFVAAG), 325-345 (IAFYLAAYTVTSLTAFGAISA), 370-390 (AAVLTLSLLSLAGIPLTVGFV), 405-427 (WPLVATVVIGSGIGIYYYLRVVL), and 443-463 (PAAGTALAAAALVILAAGLFP). A disordered region spans residues 473–493 (VPQPPPTADSPQRLTATGGLP).

Belongs to the complex I subunit 2 family. As to quaternary structure, NDH-1 is composed of 14 different subunits. Subunits NuoA, H, J, K, L, M, N constitute the membrane sector of the complex.

Its subcellular location is the cell inner membrane. It carries out the reaction a quinone + NADH + 5 H(+)(in) = a quinol + NAD(+) + 4 H(+)(out). Its function is as follows. NDH-1 shuttles electrons from NADH, via FMN and iron-sulfur (Fe-S) centers, to quinones in the respiratory chain. The immediate electron acceptor for the enzyme in this species is believed to be ubiquinone. Couples the redox reaction to proton translocation (for every two electrons transferred, four hydrogen ions are translocated across the cytoplasmic membrane), and thus conserves the redox energy in a proton gradient. The polypeptide is NADH-quinone oxidoreductase subunit N (Methylococcus capsulatus (strain ATCC 33009 / NCIMB 11132 / Bath)).